Consider the following 431-residue polypeptide: 3-deoxy-D-manno-octulosonic acid transferase (431 aa).

Residues 5–27 (WLTSRLYDAFLVCAFFVSAPRIF) form a helical; Signal-anchor membrane-spanning segment. The Proton acceptor role is filled by glutamate 67. CMP-binding positions include 275–276 (PR), 315–317 (MGV), and 342–345 (NLLE).

The protein belongs to the glycosyltransferase group 1 family. Glycosyltransferase 30 subfamily.

Its subcellular location is the cell inner membrane. It carries out the reaction lipid IVA (E. coli) + CMP-3-deoxy-beta-D-manno-octulosonate = alpha-Kdo-(2-&gt;6)-lipid IVA (E. coli) + CMP + H(+). The enzyme catalyses alpha-Kdo-(2-&gt;6)-lipid IVA (E. coli) + CMP-3-deoxy-beta-D-manno-octulosonate = alpha-Kdo-(2-&gt;4)-alpha-Kdo-(2-&gt;6)-lipid IVA (E. coli) + CMP + H(+). It catalyses the reaction alpha-Kdo-(2-&gt;4)-alpha-Kdo-(2-&gt;6)-lipid IVA (E. coli) + CMP-3-deoxy-beta-D-manno-octulosonate = alpha-Kdo-(2-&gt;8)-alpha-Kdo-(2-&gt;4)-alpha-Kdo-(2-&gt;6)-lipid IVA (E. coli) + CMP + H(+). The protein operates within bacterial outer membrane biogenesis; LPS core biosynthesis. Functionally, involved in lipopolysaccharide (LPS) biosynthesis. Catalyzes the transfer of three 3-deoxy-D-manno-octulosonate (Kdo) residues from CMP-Kdo to lipid IV(A), the tetraacyldisaccharide-1,4'-bisphosphate precursor of lipid A. Thus generates the genus-specific LPS epitope of Chlamydia, composed of the trisaccharide alpha-Kdo-(2-&gt;8)-alpha-Kdo-(2-&gt;4)-alpha-Kdo. This Chlamydia trachomatis serovar A (strain ATCC VR-571B / DSM 19440 / HAR-13) protein is 3-deoxy-D-manno-octulosonic acid transferase (waaA).